Here is a 482-residue protein sequence, read N- to C-terminus: MESIKKVMVFGSGPIVIGQAAEFDFSGSQACKALKEEGIYTILVNSNPATIQTDTDMADKVYLEPLHPTIVEKIIEKERPDAILPTMGGQTGLNLALELHRRGILDKYGIKLLGSNIRTIEIAEDRELFAEAMAEINEPVTKCKAVNSVDEAVEFAEEIGYPVIVRPAFTLGGTGGGIAHNKEELIDITSKGLKYSIINQVLIDESVLGWKEFELEVMRDRKDTCIIVCGMENIDPMGIHTGESIVVSPIQTLPDEFYQKLRNAAIKIIRHLGIEGGCNIQFAVNKEMTEYRVIEVNPRVSRSSALASKATGYPIARIAAKIAIGKTLDEILNDVTKETPASFEPTLDYVVVKIPRWPFDKFKTVDKKLGTSMKSTGEVMAIGRSFEEALQKAIRSLDIGRFGIIGDGKDKDYTDEEIEEILKNPTDERIFVIAKALEKGWSVEKIVELTDIDEFFIKKIKNIVDMKKELEKLKEEIKKLNA.

Positions Met1–Asp398 are carboxyphosphate synthetic domain. Residues Arg126, Arg166, Gly172, Gly173, Glu205, Val207, Glu212, Gly238, Ile239, His240, Gln281, and Glu295 each coordinate ATP. The 195-residue stretch at Ala130–Ile324 folds into the ATP-grasp domain. Mg(2+)-binding residues include Gln281, Glu295, and Asn297. Gln281, Glu295, and Asn297 together coordinate Mn(2+).

It belongs to the CarB family. Composed of two chains; the small (or glutamine) chain promotes the hydrolysis of glutamine to ammonia, which is used by the large (or ammonia) chain to synthesize carbamoyl phosphate. Tetramer of heterodimers (alpha,beta)4. It depends on Mg(2+) as a cofactor. Requires Mn(2+) as cofactor.

The enzyme catalyses hydrogencarbonate + L-glutamine + 2 ATP + H2O = carbamoyl phosphate + L-glutamate + 2 ADP + phosphate + 2 H(+). It catalyses the reaction hydrogencarbonate + NH4(+) + 2 ATP = carbamoyl phosphate + 2 ADP + phosphate + 2 H(+). Its pathway is amino-acid biosynthesis; L-arginine biosynthesis; carbamoyl phosphate from bicarbonate: step 1/1. It participates in pyrimidine metabolism; UMP biosynthesis via de novo pathway; (S)-dihydroorotate from bicarbonate: step 1/3. Its function is as follows. Large subunit of the glutamine-dependent carbamoyl phosphate synthetase (CPSase). CPSase catalyzes the formation of carbamoyl phosphate from the ammonia moiety of glutamine, carbonate, and phosphate donated by ATP, constituting the first step of 2 biosynthetic pathways, one leading to arginine and/or urea and the other to pyrimidine nucleotides. The large subunit (synthetase) binds the substrates ammonia (free or transferred from glutamine from the small subunit), hydrogencarbonate and ATP and carries out an ATP-coupled ligase reaction, activating hydrogencarbonate by forming carboxy phosphate which reacts with ammonia to form carbamoyl phosphate. The sequence is that of Carbamoyl phosphate synthase large chain, N-terminal section (carB1) from Methanocaldococcus jannaschii (strain ATCC 43067 / DSM 2661 / JAL-1 / JCM 10045 / NBRC 100440) (Methanococcus jannaschii).